The sequence spans 555 residues: Protection of telomeres protein 1 (555 aa).

The protein belongs to the telombin family. Self-associates. Interacts with ccq1, poz1 and tpz1.

It is found in the nucleus. The protein localises to the chromosome. It localises to the telomere. Single-stranded telomeric DNA-binding protein that is required to protect the 3'-end telomeric overhang. It binds the consensus sequence 5'-GGTTAC-3'. Regulates telomerase and telomere length. The protein is Protection of telomeres protein 1 (pot1) of Schizosaccharomyces pombe (strain 972 / ATCC 24843) (Fission yeast).